The following is a 379-amino-acid chain: Fucose-specific lectin g276 (379 aa).

Glutamate 126 contributes to the alpha-L-fucose binding site. Beta-L-fucose-binding residues include glutamate 126, arginine 163, and tryptophan 185. Residues tryptophan 185, arginine 222, and glutamate 234 each coordinate alpha-L-fucose. 2 residues coordinate beta-L-fucose: tryptophan 242 and glutamate 282. Alpha-L-fucose is bound at residue tryptophan 289.

This sequence belongs to the fungal fucose-specific lectin family.

Functionally, lectin that specifically binds to L-fucose. Is associated with the morphogenesis of the fungus, and plays a role in the formation of the constricting rings involved in nematode-trapping. The protein is Fucose-specific lectin g276 of Arthrobotrys oligospora (strain ATCC 24927 / CBS 115.81 / DSM 1491) (Nematode-trapping fungus).